The chain runs to 316 residues: IDS-like terpene synthase 2 (316 aa).

Residues Asp69 and Asp73 each contribute to the Mg(2+) site.

This sequence belongs to the FPP/GGPP synthase family. Mg(2+) is required as a cofactor.

The catalysed reaction is (2E)-geranyl diphosphate + H2O = linalool + diphosphate. It catalyses the reaction (2E,6E)-farnesyl diphosphate + H2O = (6E)-nerolidol + diphosphate. Its function is as follows. Terpene synthase that shows monoterpene synthase activity and produces linalool, using geranyl diphosphate (GPP) as substrate. Also shows sesquiterpene synthase activity as it is able to convert farnesyl diphosphate (FPP) into (E)-nerolidol. The chain is IDS-like terpene synthase 2 from Melampsora larici-populina (strain 98AG31 / pathotype 3-4-7) (Poplar leaf rust fungus).